Consider the following 277-residue polypeptide: Bifunctional protein FolD (277 aa).

Residues 164-166 (GRS), Ser189, and Thr230 contribute to the NADP(+) site.

It belongs to the tetrahydrofolate dehydrogenase/cyclohydrolase family. In terms of assembly, homodimer.

The enzyme catalyses (6R)-5,10-methylene-5,6,7,8-tetrahydrofolate + NADP(+) = (6R)-5,10-methenyltetrahydrofolate + NADPH. It catalyses the reaction (6R)-5,10-methenyltetrahydrofolate + H2O = (6R)-10-formyltetrahydrofolate + H(+). It participates in one-carbon metabolism; tetrahydrofolate interconversion. Functionally, catalyzes the oxidation of 5,10-methylenetetrahydrofolate to 5,10-methenyltetrahydrofolate and then the hydrolysis of 5,10-methenyltetrahydrofolate to 10-formyltetrahydrofolate. In Clostridium perfringens (strain ATCC 13124 / DSM 756 / JCM 1290 / NCIMB 6125 / NCTC 8237 / Type A), this protein is Bifunctional protein FolD.